Reading from the N-terminus, the 178-residue chain is Large ribosomal subunit protein uL6 (178 aa).

Belongs to the universal ribosomal protein uL6 family. As to quaternary structure, part of the 50S ribosomal subunit.

Its function is as follows. This protein binds to the 23S rRNA, and is important in its secondary structure. It is located near the subunit interface in the base of the L7/L12 stalk, and near the tRNA binding site of the peptidyltransferase center. This Corynebacterium jeikeium (strain K411) protein is Large ribosomal subunit protein uL6.